The chain runs to 129 residues: UPF0102 protein Ctha_1382 (129 aa).

The protein belongs to the UPF0102 family.

The protein is UPF0102 protein Ctha_1382 of Chloroherpeton thalassium (strain ATCC 35110 / GB-78).